The primary structure comprises 204 residues: MTERSPLRVGIGGPVGSGKTALTLNLCRALRNKYNMAVVTNDIYTKEDSNFLTRNEAMTPDRIVGVETGGCPHTAIREDASINLAAIDDLCEKFDGLELIIIESGGDNLAATFSPELSDLTLYVIDVAGGEKIPRKGGPGITKSDLLIINKTDLAPMVGANLDVMEQDAKRMRGEKPFLFSNMKTEDGLTQIIEFIEKQGLFKA.

13–20 (GPVGSGKT) contributes to the GTP binding site.

The protein belongs to the SIMIBI class G3E GTPase family. UreG subfamily. As to quaternary structure, homodimer. UreD, UreF and UreG form a complex that acts as a GTP-hydrolysis-dependent molecular chaperone, activating the urease apoprotein by helping to assemble the nickel containing metallocenter of UreC. The UreE protein probably delivers the nickel.

The protein resides in the cytoplasm. Its function is as follows. Facilitates the functional incorporation of the urease nickel metallocenter. This process requires GTP hydrolysis, probably effectuated by UreG. The sequence is that of Urease accessory protein UreG from Acinetobacter baylyi (strain ATCC 33305 / BD413 / ADP1).